We begin with the raw amino-acid sequence, 220 residues long: Ribose-5-phosphate isomerase A (220 aa).

Residues 25–28 (TGST), 80–83 (DGAD), and 93–96 (KGGG) each bind substrate. Residue E102 is the Proton acceptor of the active site. K120 provides a ligand contact to substrate.

It belongs to the ribose 5-phosphate isomerase family. Homodimer.

The enzyme catalyses aldehydo-D-ribose 5-phosphate = D-ribulose 5-phosphate. Its pathway is carbohydrate degradation; pentose phosphate pathway; D-ribose 5-phosphate from D-ribulose 5-phosphate (non-oxidative stage): step 1/1. In terms of biological role, catalyzes the reversible conversion of ribose-5-phosphate to ribulose 5-phosphate. In Bacillus cereus (strain ZK / E33L), this protein is Ribose-5-phosphate isomerase A.